The chain runs to 1129 residues: PAN2-PAN3 deadenylation complex catalytic subunit PAN2 (1129 aa).

5 WD repeats span residues 20–60 (PPAV…YTSY), 104–146 (PDFK…DTLP), 148–183 (DAQY…VIKV), 186–226 (GHTG…FSLK), and 280–319 (LYDS…HFPE). The segment at 320 to 457 (YSNPTEFADH…DLHLDDVTRK (138 aa)) is linker. The tract at residues 396–427 (RTKRRNQIEVTRQTDRSSDSLTPPKFLSEKSR) is disordered. The region spanning 458-830 (DVPAMYGNVE…LPSVLTFQTK (373 aa)) is the USP domain. The region spanning 880–1052 (VAIDAEFIRL…IEDATTALKL (173 aa)) is the Exonuclease domain. Residues Asp883, Glu885, Asp992, and Asp1045 each coordinate a divalent metal cation. Residues 1083 to 1129 (APGSGNRNSMPAGMTATGAGRDTPEPMTTPKKGGAFGGVGFRSPMRR) are disordered.

Belongs to the peptidase C19 family. PAN2 subfamily. As to quaternary structure, forms a heterotrimer with an asymmetric homodimer of the regulatory subunit PAN3 to form the poly(A)-nuclease (PAN) deadenylation complex. The cofactor is a divalent metal cation.

Its subcellular location is the cytoplasm. It catalyses the reaction Exonucleolytic cleavage of poly(A) to 5'-AMP.. Its activity is regulated as follows. Positively regulated by the regulatory subunit PAN3. Catalytic subunit of the poly(A)-nuclease (PAN) deadenylation complex, one of two cytoplasmic mRNA deadenylases involved in mRNA turnover. PAN specifically shortens poly(A) tails of RNA and the activity is stimulated by poly(A)-binding protein PAB1. PAN deadenylation is followed by rapid degradation of the shortened mRNA tails by the CCR4-NOT complex. Deadenylated mRNAs are then degraded by two alternative mechanisms, namely exosome-mediated 3'-5' exonucleolytic degradation, or deadenylation-dependent mRNA decaping and subsequent 5'-3' exonucleolytic degradation by XRN1. May also be involved in post-transcriptional maturation of mRNA poly(A) tails. The sequence is that of PAN2-PAN3 deadenylation complex catalytic subunit PAN2 from Phaeosphaeria nodorum (strain SN15 / ATCC MYA-4574 / FGSC 10173) (Glume blotch fungus).